A 549-amino-acid polypeptide reads, in one-letter code: Oxygen-dependent choline dehydrogenase (549 aa).

4–33 (DFVIIGSGSAGSAMAYRLSEDGRYSVIVIE) serves as a coordination point for FAD. His-465 functions as the Proton acceptor in the catalytic mechanism.

It belongs to the GMC oxidoreductase family. Requires FAD as cofactor.

The enzyme catalyses choline + A = betaine aldehyde + AH2. It catalyses the reaction betaine aldehyde + NAD(+) + H2O = glycine betaine + NADH + 2 H(+). It functions in the pathway amine and polyamine biosynthesis; betaine biosynthesis via choline pathway; betaine aldehyde from choline (cytochrome c reductase route): step 1/1. Involved in the biosynthesis of the osmoprotectant glycine betaine. Catalyzes the oxidation of choline to betaine aldehyde and betaine aldehyde to glycine betaine at the same rate. In Brucella anthropi (strain ATCC 49188 / DSM 6882 / CCUG 24695 / JCM 21032 / LMG 3331 / NBRC 15819 / NCTC 12168 / Alc 37) (Ochrobactrum anthropi), this protein is Oxygen-dependent choline dehydrogenase.